A 1916-amino-acid polypeptide reads, in one-letter code: Endoribonuclease Dicer (1916 aa).

One can recognise a Helicase ATP-binding domain in the interval 51-227; the sequence is LLEAALDHNT…ELEEKIQKLE (177 aa). Residue 64 to 71 participates in ATP binding; it reads LNTGSGKT. The DECH box signature appears at 175–178; it reads DECH. Positions 256-595 are required for interaction with PRKRA and TARBP2; sequence DCGPFTDRSG…LRNKCSKSAD (340 aa). The interval 409–433 is disordered; that stretch reads YVSWSDSEDDDDDEEIEEKEKPETN. A phosphoserine mark is found at Ser-413 and Ser-415. Over residues 414–425 the composition is skewed to acidic residues; it reads DSEDDDDDEEIE. A Helicase C-terminal domain is found at 433–602; it reads NFPSPFTNIL…SADGAEADVH (170 aa). In terms of domain architecture, Dicer dsRNA-binding fold spans 630–722; that stretch reads AIGHINRYCA…MPVGKETVKY (93 aa). Residues 726-745 form a disordered region; the sequence is LDLHDEEETSVPGRPGSTKR. In terms of domain architecture, PAZ spans 895 to 1042; that stretch reads KFMEDIEKSE…LVPELCAIHP (148 aa). Residues Ser-1016 and Ser-1160 each carry the phosphoserine modification. Residues 1276-1403 enclose the RNase III 1 domain; sequence DSEQSPSVGY…SEKWEKDEMT (128 aa). Glu-1316, Glu-1395, and Glu-1398 together coordinate Mg(2+). Phosphoserine is present on residues Ser-1456, Ser-1464, and Ser-1466. Residues 1598–1626 are disordered; sequence ALDPAQENGSSQQKSLSGSCAAPVGPRSS. The segment covering 1604 to 1615 has biased composition (polar residues); it reads ENGSSQQKSLSG. Residues 1660 to 1818 form the RNase III 2 domain; the sequence is FETFEKKINY…LAGAIYMDSG (159 aa). Mg(2+)-binding residues include Glu-1699, Asp-1804, and Glu-1807. The DRBM domain occupies 1843 to 1908; the sequence is VPRSPVRELL…ARRALRSLKA (66 aa). Ser-1862 carries the phosphoserine modification.

The protein belongs to the helicase family. Dicer subfamily. Component of the RISC loading complex (RLC), or micro-RNA (miRNA) loading complex (miRLC), which is composed of DICER1, AGO2 and TARBP2; DICER1 and TARBP2 are required to process precursor miRNAs (pre-miRNAs) to mature miRNAs and then load them onto AGO2. Note that the trimeric RLC/miRLC is also referred to as RISC. Interacts with DHX9, AGO1, PIWIL1 and PRKRA. Interacts with AGO2, TARBP2, EIF6, MOV10 and RPL7A (60S ribosome subunit); they form a large RNA-induced silencing complex (RISC). Interacts with BCDIN3D. Interacts (via Dicer dsRNA-binding fold domain) with ALOX5 (via PLAT domain); this interaction enhances arachidonate 5-lipoxygenase activity and modifies the miRNA precursor processing activity of DICER1. The cofactor is Mg(2+). It depends on Mn(2+) as a cofactor. As to expression, isoform 1 is expressed in a wide variety of tissues. Isoform 2 is specifically expressed in oocytes during their growth (at protein level).

It is found in the cytoplasm. The enzyme catalyses Endonucleolytic cleavage to 5'-phosphomonoester.. Double-stranded RNA (dsRNA) endoribonuclease playing a central role in short dsRNA-mediated post-transcriptional gene silencing. Cleaves naturally occurring long dsRNAs and short hairpin pre-microRNAs (miRNA) into fragments of twenty-one to twenty-three nucleotides with 3' overhang of two nucleotides, producing respectively short interfering RNAs (siRNA) and mature microRNAs. SiRNAs and miRNAs serve as guide to direct the RNA-induced silencing complex (RISC) to complementary RNAs to degrade them or prevent their translation. Gene silencing mediated by siRNAs, also called RNA interference, controls the elimination of transcripts from mobile and repetitive DNA elements of the genome but also the degradation of exogenous RNA of viral origin for instance. The miRNA pathway on the other side is a mean to specifically regulate the expression of target genes. Its function is as follows. More active than isoform 1 to process long double-stranded RNA into siRNAs. Responsible for the accumulation of endogenous siRNAs observed in mouse oocytes compared to somatic cells and it regulates meiotic spindle organization in female germline. The polypeptide is Endoribonuclease Dicer (Dicer1) (Mus musculus (Mouse)).